A 157-amino-acid chain; its full sequence is UPF0127 protein TK1120 (157 aa).

Belongs to the UPF0127 family.

This chain is UPF0127 protein TK1120, found in Thermococcus kodakarensis (strain ATCC BAA-918 / JCM 12380 / KOD1) (Pyrococcus kodakaraensis (strain KOD1)).